The chain runs to 180 residues: Large ribosomal subunit protein uL6 (180 aa).

The protein belongs to the universal ribosomal protein uL6 family. In terms of assembly, part of the 50S ribosomal subunit.

Functionally, this protein binds to the 23S rRNA, and is important in its secondary structure. It is located near the subunit interface in the base of the L7/L12 stalk, and near the tRNA binding site of the peptidyltransferase center. This is Large ribosomal subunit protein uL6 from Clostridium botulinum (strain Okra / Type B1).